A 403-amino-acid polypeptide reads, in one-letter code: L-cysteine:1D-myo-inositol 2-amino-2-deoxy-alpha-D-glucopyranoside ligase (403 aa).

Residue Cys-43 participates in Zn(2+) binding. L-cysteinyl-5'-AMP contacts are provided by residues 43–46 (CGIT), Thr-58, and 81–83 (NTT). The 'HIGH' region signature appears at 45 to 55 (ITPYDATHLGH). Positions 183–188 (ERGGDP) match the 'ERGGDP' region motif. Residue Trp-223 coordinates L-cysteinyl-5'-AMP. Cys-227 is a binding site for Zn(2+). 245–247 (GSD) contributes to the L-cysteinyl-5'-AMP binding site. His-252 is a Zn(2+) binding site. L-cysteinyl-5'-AMP is bound at residue Val-279. The short motif at 285-289 (KMSKS) is the 'KMSKS' region element.

This sequence belongs to the class-I aminoacyl-tRNA synthetase family. MshC subfamily. In terms of assembly, monomer. The cofactor is Zn(2+).

The enzyme catalyses 1D-myo-inositol 2-amino-2-deoxy-alpha-D-glucopyranoside + L-cysteine + ATP = 1D-myo-inositol 2-(L-cysteinylamino)-2-deoxy-alpha-D-glucopyranoside + AMP + diphosphate + H(+). Its function is as follows. Catalyzes the ATP-dependent condensation of GlcN-Ins and L-cysteine to form L-Cys-GlcN-Ins. In Thermobispora bispora (strain ATCC 19993 / DSM 43833 / CBS 139.67 / JCM 10125 / KCTC 9307 / NBRC 14880 / R51), this protein is L-cysteine:1D-myo-inositol 2-amino-2-deoxy-alpha-D-glucopyranoside ligase.